The chain runs to 350 residues: Inhibitor of nuclear factor kappa-B kinase-interacting protein (350 aa).

The segment covering 1 to 11 (MSEVKSRKKSG) has biased composition (basic residues). The disordered stretch occupies residues 1-39 (MSEVKSRKKSGPKGAPAAEPGKRSEGGKTPVARSSGGGG). Residues 46-62 (CLSLLSLGTCLGLAWFV) form a helical membrane-spanning segment. Asn-144 is a glycosylation site (N-linked (GlcNAc...) asparagine). Residues 184–217 (GLVTDVISLTDSVQELENKIEKVEKNTVKNIGDL) adopt a coiled-coil conformation. The N-linked (GlcNAc...) asparagine glycan is linked to Asn-328.

N-glycosylated. Isoform 4 is glycosylated at Asn-154. In terms of tissue distribution, expressed in vein endothelial cells. Isoform 4 is expressed in lung, kidney, spleen, thymus and skeletal muscle.

It is found in the endoplasmic reticulum membrane. Target of p53/TP53 with pro-apoptotic function. This is Inhibitor of nuclear factor kappa-B kinase-interacting protein (IKBIP) from Homo sapiens (Human).